A 350-amino-acid chain; its full sequence is Small ribosomal subunit biogenesis GTPase RsgA (350 aa).

Residues 1–17 (MSKNKLSKGQQRRVNAN) show a composition bias toward polar residues. Positions 1–27 (MSKNKLSKGQQRRVNANHQRRLKTSAE) are disordered. In terms of domain architecture, CP-type G spans 104-273 (TSVLTRPDFY…VIDSPGVREF (170 aa)). GTP is bound by residues 160–163 (NKID) and 214–222 (GQSGVGKSS). Zn(2+) is bound by residues C297, C302, H304, and C310.

This sequence belongs to the TRAFAC class YlqF/YawG GTPase family. RsgA subfamily. In terms of assembly, monomer. Associates with 30S ribosomal subunit, binds 16S rRNA. The cofactor is Zn(2+).

It localises to the cytoplasm. In terms of biological role, one of several proteins that assist in the late maturation steps of the functional core of the 30S ribosomal subunit. Helps release RbfA from mature subunits. May play a role in the assembly of ribosomal proteins into the subunit. Circularly permuted GTPase that catalyzes slow GTP hydrolysis, GTPase activity is stimulated by the 30S ribosomal subunit. The protein is Small ribosomal subunit biogenesis GTPase RsgA of Salmonella typhi.